The chain runs to 1342 residues: DNA-directed RNA polymerase subunit beta (1342 aa).

Belongs to the RNA polymerase beta chain family. The RNAP catalytic core consists of 2 alpha, 1 beta, 1 beta' and 1 omega subunit. When a sigma factor is associated with the core the holoenzyme is formed, which can initiate transcription.

It carries out the reaction RNA(n) + a ribonucleoside 5'-triphosphate = RNA(n+1) + diphosphate. Functionally, DNA-dependent RNA polymerase catalyzes the transcription of DNA into RNA using the four ribonucleoside triphosphates as substrates. This chain is DNA-directed RNA polymerase subunit beta, found in Erwinia tasmaniensis (strain DSM 17950 / CFBP 7177 / CIP 109463 / NCPPB 4357 / Et1/99).